An 85-amino-acid chain; its full sequence is Hepcidin (85 aa).

Residues 1–24 form the signal peptide; that stretch reads MKTFSVAVAVAVVLAFICLQESSA. Residues 25–64 constitute a propeptide that is removed on maturation; it reads VPVTEVQELEEPMSNEYQEMPVESWKMPYNNRHKRHSSPG. 4 cysteine pairs are disulfide-bonded: C66–C83, C69–C72, C70–C79, and C73–C82.

As to expression, predominantly expressed in liver.

It is found in the secreted. Functionally, seems to act as a signaling molecule involved in the maintenance of iron homeostasis. Seems to be required in conjunction with HFE to regulate both intestinal iron absorption and iron storage in macrophages. Antimicrobial activity against Gram-negative bacteria such as E.coli. The polypeptide is Hepcidin (hamp) (Morone chrysops x Morone saxatilis (White bass x Striped bass)).